Consider the following 410-residue polypeptide: Divergent protein kinase domain 1A (410 aa).

Topologically, residues Met-1–Ser-5 are cytoplasmic. The chain crosses the membrane as a helical span at residues Tyr-6–Ile-26. The Lumenal portion of the chain corresponds to Tyr-27–Ser-410.

The protein belongs to the DIPK family. Among the many cysteines in the lumenal domain, most are probably involved in disulfide bonds.

It is found in the endoplasmic reticulum membrane. The chain is Divergent protein kinase domain 1A (dipk1a) from Xenopus laevis (African clawed frog).